The sequence spans 141 residues: Terrelysin (141 aa).

Belongs to the aegerolysin family.

Its subcellular location is the cytoplasm. Functionally, hemolysins are potential virulence factors. Has hemolytic activity against sheep erythrocytes in vitro. In Aspergillus terreus (strain NIH 2624 / FGSC A1156), this protein is Terrelysin.